The primary structure comprises 528 residues: Capsid scaffolding protein (528 aa).

Active-site charge relay system residues include His-46, Ser-116, and His-135. The interaction with pAP stretch occupies residues 270–288; the sequence is HGNYDAVESATATTAMSNQ. The segment at 394 to 432 is disordered; it reads KKRHFQSDSEDELSFPGDPEYTKKRRRHKVDNDDDKEMA. A Nuclear localization signal motif is present at residues 416-422; sequence KKRRRHK. Residues 508 to 528 form an interaction with major capsid protein region; that stretch reads SMDLLKLNKKLFVDALNKMDS.

It belongs to the herpesviridae capsid scaffolding protein family. Homomultimer. Interacts with major capsid protein. In terms of assembly, exists in a monomer-dimer equilibrium with the dimer being the active species. Capsid scaffolding protein is cleaved by assemblin after formation of the spherical procapsid. As a result, the capsid obtains its mature, icosahedral shape. Cleavages occur at two or more sites: release (R-site) and maturation (M-site).

Its subcellular location is the host cytoplasm. The protein localises to the host nucleus. The enzyme catalyses Cleaves -Ala-|-Ser- and -Ala-|-Ala- bonds in the scaffold protein.. In terms of biological role, acts as a scaffold protein by binding major capsid protein in the cytoplasm, inducing the nuclear localization of both proteins. Multimerizes in the nucleus such as major capsid protein forms the icosahedral T=16 capsid. Autocatalytic cleavage releases the assembly protein, and subsequently abolishes interaction with major capsid protein. Cleavages products are evicted from the capsid before or during DNA packaging. Protease that plays an essential role in virion assembly within the nucleus. Catalyzes the cleavage of the assembly protein after formation of the spherical procapsid. By that cleavage, the capsid matures and gains its icosahedral shape. The cleavage sites seem to include -Ala-Ser-, -Ala-Ala-, as well as Ala-Thr bonds. Assemblin and cleavages products are evicted from the capsid before or during DNA packaging. Functionally, plays a major role in capsid assembly. Acts as a scaffold protein by binding major capsid protein. Multimerizes in the nucleus such as major capsid protein forms the icosahedral T=16 capsid. Cleaved by assemblin after capsid completion. The cleavages products are evicted from the capsid before or during DNA packaging. This Homo sapiens (Human) protein is Capsid scaffolding protein (U53).